Here is a 657-residue protein sequence, read N- to C-terminus: UvrABC system protein B (657 aa).

The Helicase ATP-binding domain maps to Lys23 to Arg414. Residue Gly36–Thr43 participates in ATP binding. The Beta-hairpin signature appears at Tyr89–Thr112. A Helicase C-terminal domain is found at Gln431–Ile593. In terms of domain architecture, UVR spans Ala622–Leu657.

Belongs to the UvrB family. Forms a heterotetramer with UvrA during the search for lesions. Interacts with UvrC in an incision complex.

It is found in the cytoplasm. Functionally, the UvrABC repair system catalyzes the recognition and processing of DNA lesions. A damage recognition complex composed of 2 UvrA and 2 UvrB subunits scans DNA for abnormalities. Upon binding of the UvrA(2)B(2) complex to a putative damaged site, the DNA wraps around one UvrB monomer. DNA wrap is dependent on ATP binding by UvrB and probably causes local melting of the DNA helix, facilitating insertion of UvrB beta-hairpin between the DNA strands. Then UvrB probes one DNA strand for the presence of a lesion. If a lesion is found the UvrA subunits dissociate and the UvrB-DNA preincision complex is formed. This complex is subsequently bound by UvrC and the second UvrB is released. If no lesion is found, the DNA wraps around the other UvrB subunit that will check the other stand for damage. The chain is UvrABC system protein B from Campylobacter jejuni (strain RM1221).